We begin with the raw amino-acid sequence, 469 residues long: tRNA-2-methylthio-N(6)-dimethylallyladenosine synthase (469 aa).

Positions 22 to 142 constitute an MTTase N-terminal domain; it reads RKVFIKTYGC…LPEALRRAKE (121 aa). The [4Fe-4S] cluster site is built by Cys-31, Cys-67, Cys-105, Cys-183, Cys-187, and Cys-190. The Radical SAM core domain maps to 169 to 401; it reads RARGVTAFLT…QALLLKQQQE (233 aa). A TRAM domain is found at 404-466; that stretch reads ESCIGKEIDL…NNSLFAERAE (63 aa).

It belongs to the methylthiotransferase family. MiaB subfamily. As to quaternary structure, monomer. The cofactor is [4Fe-4S] cluster.

It localises to the cytoplasm. It carries out the reaction N(6)-dimethylallyladenosine(37) in tRNA + (sulfur carrier)-SH + AH2 + 2 S-adenosyl-L-methionine = 2-methylsulfanyl-N(6)-dimethylallyladenosine(37) in tRNA + (sulfur carrier)-H + 5'-deoxyadenosine + L-methionine + A + S-adenosyl-L-homocysteine + 2 H(+). Its function is as follows. Catalyzes the methylthiolation of N6-(dimethylallyl)adenosine (i(6)A), leading to the formation of 2-methylthio-N6-(dimethylallyl)adenosine (ms(2)i(6)A) at position 37 in tRNAs that read codons beginning with uridine. The sequence is that of tRNA-2-methylthio-N(6)-dimethylallyladenosine synthase from Rhizobium leguminosarum bv. trifolii (strain WSM2304).